The primary structure comprises 338 residues: MKRMIALDGAQGEGGGQILRSALSLSMITGQPFTITGIRAGRAKPGLLRQHLTAVKAAAEICRATVEGAELGSQRLVFRPGTVRGGDYRFAIGSAGSCTLVLQTVLPALWFADGPSRVEVSGGTDNPSAPPADFIRRVLEPLLAKIGVHQQTTLLRHGFYPAGGGVVATEVSPVASFNSLQLGERGNIVQMRGEVLLAGVPRHVAEREIATLAASFSLHEQAVHSLPRDQGPGNTVSLEVESENITERFFVVGEKRVSAEVVAAQLVKEVKRYLASPAAVGEYLADQLVLPMALAGTGEFTVAHPSCHLLTNIAVVERFLPVRFGLIETDGVTRVSIE.

Residues glutamine 103 and 283–287 (YLADQ) contribute to the ATP site. Histidine 308 serves as the catalytic Tele-AMP-histidine intermediate.

The protein belongs to the RNA 3'-terminal cyclase family. Type 1 subfamily.

It is found in the cytoplasm. The enzyme catalyses a 3'-end 3'-phospho-ribonucleotide-RNA + ATP = a 3'-end 2',3'-cyclophospho-ribonucleotide-RNA + AMP + diphosphate. Catalyzes the conversion of 3'-phosphate to a 2',3'-cyclic phosphodiester at the end of RNA. The mechanism of action of the enzyme occurs in 3 steps: (A) adenylation of the enzyme by ATP; (B) transfer of adenylate to an RNA-N3'P to produce RNA-N3'PP5'A; (C) and attack of the adjacent 2'-hydroxyl on the 3'-phosphorus in the diester linkage to produce the cyclic end product. The biological role of this enzyme is unknown but it is likely to function in some aspects of cellular RNA processing. The polypeptide is RNA 3'-terminal phosphate cyclase (Escherichia coli O6:K15:H31 (strain 536 / UPEC)).